Consider the following 241-residue polypeptide: MSRGVSSFSIHNDSAADTKRIGYGMGEKSSAGSSRDQTYSVKPASDVKDKKKVSESHTFQVSENYRLTQTFGRLYSPIPFGRESRSKREYTLDYGMNNKSAIKFVFHGKEELKVNGGKVSVVVDKFKKSDKGAMDKLAQKFLTSIKKEKVETLFPVSLKLRLKLKESGEEYQTANINNNLSGHMVKDYSDLDKVVRQVLKSFFDLMPKDTDEGLVLFSEFIKQEAKPGSTIVPILIDYDTE.

The tract at residues 19-53 is disordered; it reads KRIGYGMGEKSSAGSSRDQTYSVKPASDVKDKKKV. A compositionally biased stretch (polar residues) spans 30 to 39; the sequence is SAGSSRDQTY.

This is an uncharacterized protein from Ostreid herpesvirus 1 (isolate France) (OsHV-1).